Reading from the N-terminus, the 338-residue chain is Lipoate-protein ligase A (338 aa).

A BPL/LPL catalytic domain is found at 29 to 216; it reads PATQRVLFLW…AFFAHYGERI (188 aa). ATP-binding positions include arginine 71, 76 to 79, and lysine 134; that span reads GAVF. Lysine 134 is a binding site for (R)-lipoate.

The protein belongs to the LplA family. In terms of assembly, monomer.

The protein resides in the cytoplasm. It carries out the reaction L-lysyl-[lipoyl-carrier protein] + (R)-lipoate + ATP = N(6)-[(R)-lipoyl]-L-lysyl-[lipoyl-carrier protein] + AMP + diphosphate + H(+). Its pathway is protein modification; protein lipoylation via exogenous pathway; protein N(6)-(lipoyl)lysine from lipoate: step 1/2. The protein operates within protein modification; protein lipoylation via exogenous pathway; protein N(6)-(lipoyl)lysine from lipoate: step 2/2. Functionally, catalyzes both the ATP-dependent activation of exogenously supplied lipoate to lipoyl-AMP and the transfer of the activated lipoyl onto the lipoyl domains of lipoate-dependent enzymes. This is Lipoate-protein ligase A from Salmonella typhi.